We begin with the raw amino-acid sequence, 284 residues long: MSPMESSSTRFPGQALPAAYLTPGSSSFTDFLRVAAPELMPGSRPVPDGAVEAPHGTTIVALTFRGGVLLAGDRRATMGNLIAQRDMEKLYVTDDYSAVGIAGTAGIALEMVRLYAIELEHYEKLEGVSLSLDGKANKLATMLRGNLQGAMAGLAVLPLFAGFDVDADDPDRAGRIVSYDITGGRYNELGGYYAVGSGSLFAKSALKKRFDPDADVDTAVRAAVEALYDAADDDTATGGPDLSRRIYPSIITITGTDGATRVPEERAAEIATEVVNGRMQNPGG.

A propeptide spans 1 to 56 (MSPMESSSTRFPGQALPAAYLTPGSSSFTDFLRVAAPELMPGSRPVPDGAVEAPHG) (removed in mature form; by autocatalysis). Thr-57 functions as the Nucleophile in the catalytic mechanism.

The protein belongs to the peptidase T1B family. In terms of assembly, the 20S proteasome core is composed of 14 alpha and 14 beta subunits that assemble into four stacked heptameric rings, resulting in a barrel-shaped structure. The two inner rings, each composed of seven catalytic beta subunits, are sandwiched by two outer rings, each composed of seven alpha subunits. The catalytic chamber with the active sites is on the inside of the barrel. Has a gated structure, the ends of the cylinder being occluded by the N-termini of the alpha-subunits. Is capped by the proteasome-associated ATPase, ARC.

It is found in the cytoplasm. It carries out the reaction Cleavage of peptide bonds with very broad specificity.. Its pathway is protein degradation; proteasomal Pup-dependent pathway. With respect to regulation, the formation of the proteasomal ATPase ARC-20S proteasome complex, likely via the docking of the C-termini of ARC into the intersubunit pockets in the alpha-rings, may trigger opening of the gate for substrate entry. Interconversion between the open-gate and close-gate conformations leads to a dynamic regulation of the 20S proteasome proteolysis activity. Its function is as follows. Component of the proteasome core, a large protease complex with broad specificity involved in protein degradation. This Saccharopolyspora erythraea (strain ATCC 11635 / DSM 40517 / JCM 4748 / NBRC 13426 / NCIMB 8594 / NRRL 2338) protein is Proteasome subunit beta.